A 196-amino-acid polypeptide reads, in one-letter code: MLDRIKGCFTESIQTQIAAAEALPDAISRAAMTLVQSLLNGNKILCCGNGTSAANAQHFAASMINRFETERPSLPAIALNADNVVLTAIANDRLHDEVYAKQVRALGHAGDVLLAISTRGNSRDIVKAVEAAVTRDMTIVALTGYDGGELAGLLGQQDVEIRIPSHRSARVQELHMLTVNCLCDLIDNTLFPHQDD.

One can recognise an SIS domain in the interval 34-196 (LVQSLLNGNK…DNTLFPHQDD (163 aa)).

This sequence belongs to the SIS family. DiaA subfamily. Homotetramer; dimer of dimers.

Its function is as follows. Required for the timely initiation of chromosomal replication via direct interactions with the DnaA initiator protein. In Yersinia enterocolitica serotype O:8 / biotype 1B (strain NCTC 13174 / 8081), this protein is DnaA initiator-associating protein DiaA.